The primary structure comprises 87 residues: Large ribosomal subunit protein bL31B (87 aa).

This sequence belongs to the bacterial ribosomal protein bL31 family. Type B subfamily. Part of the 50S ribosomal subunit.

The polypeptide is Large ribosomal subunit protein bL31B (Salinispora arenicola (strain CNS-205)).